A 253-amino-acid polypeptide reads, in one-letter code: Adenosylcobinamide-GDP ribazoletransferase (253 aa).

Helical transmembrane passes span 33–53, 106–126, 132–152, and 178–198; these read ISPL…YVLL, IGSG…VALL, FYTI…GLYI, and VLLL…FLVF.

The protein belongs to the CobS family. Mg(2+) serves as cofactor.

It localises to the cell membrane. It catalyses the reaction alpha-ribazole + adenosylcob(III)inamide-GDP = adenosylcob(III)alamin + GMP + H(+). It carries out the reaction alpha-ribazole 5'-phosphate + adenosylcob(III)inamide-GDP = adenosylcob(III)alamin 5'-phosphate + GMP + H(+). The protein operates within cofactor biosynthesis; adenosylcobalamin biosynthesis; adenosylcobalamin from cob(II)yrinate a,c-diamide: step 7/7. Functionally, joins adenosylcobinamide-GDP and alpha-ribazole to generate adenosylcobalamin (Ado-cobalamin). Also synthesizes adenosylcobalamin 5'-phosphate from adenosylcobinamide-GDP and alpha-ribazole 5'-phosphate. The sequence is that of Adenosylcobinamide-GDP ribazoletransferase from Saccharolobus islandicus (strain Y.G.57.14 / Yellowstone #1) (Sulfolobus islandicus).